A 727-amino-acid polypeptide reads, in one-letter code: Catalase-peroxidase (727 aa).

The tract at residues 1–21 (MDAKVEDNIAGKCPMGHGRGP) is disordered. The tryptophyl-tyrosyl-methioninium (Trp-Tyr) (with M-243) cross-link spans 95–217 (WHAAGTYRIT…LGAVQMGLIY (123 aa)). His-96 acts as the Proton acceptor in catalysis. Positions 217–243 (YVNPEGPNGNPDPLASARDIRETFARM) form a cross-link, tryptophyl-tyrosyl-methioninium (Tyr-Met) (with W-95). Residue His-258 coordinates heme b.

This sequence belongs to the peroxidase family. Peroxidase/catalase subfamily. As to quaternary structure, homodimer or homotetramer. Heme b is required as a cofactor. Post-translationally, formation of the three residue Trp-Tyr-Met cross-link is important for the catalase, but not the peroxidase activity of the enzyme.

The enzyme catalyses H2O2 + AH2 = A + 2 H2O. It catalyses the reaction 2 H2O2 = O2 + 2 H2O. Bifunctional enzyme with both catalase and broad-spectrum peroxidase activity. Important for stationary phase survival. The polypeptide is Catalase-peroxidase (Caulobacter vibrioides (strain ATCC 19089 / CIP 103742 / CB 15) (Caulobacter crescentus)).